Reading from the N-terminus, the 420-residue chain is Serine hydroxymethyltransferase (420 aa).

(6S)-5,6,7,8-tetrahydrofolate-binding positions include Leu-121 and Gly-125–Leu-127. Lys-230 carries the post-translational modification N6-(pyridoxal phosphate)lysine. Residues Glu-246 and Ser-354–Phe-356 contribute to the (6S)-5,6,7,8-tetrahydrofolate site.

Belongs to the SHMT family. As to quaternary structure, homodimer. Pyridoxal 5'-phosphate is required as a cofactor.

Its subcellular location is the cytoplasm. The catalysed reaction is (6R)-5,10-methylene-5,6,7,8-tetrahydrofolate + glycine + H2O = (6S)-5,6,7,8-tetrahydrofolate + L-serine. It participates in one-carbon metabolism; tetrahydrofolate interconversion. The protein operates within amino-acid biosynthesis; glycine biosynthesis; glycine from L-serine: step 1/1. Its function is as follows. Catalyzes the reversible interconversion of serine and glycine with tetrahydrofolate (THF) serving as the one-carbon carrier. This reaction serves as the major source of one-carbon groups required for the biosynthesis of purines, thymidylate, methionine, and other important biomolecules. Also exhibits THF-independent aldolase activity toward beta-hydroxyamino acids, producing glycine and aldehydes, via a retro-aldol mechanism. In Rickettsia canadensis (strain McKiel), this protein is Serine hydroxymethyltransferase.